The following is a 341-amino-acid chain: Malate dehydrogenase, mitochondrial (341 aa).

NAD(+) is bound by residues 35–41 and Asp-61; that span reads GAAGGIG. Arg-108 and Arg-114 together coordinate substrate. NAD(+)-binding positions include Asn-121 and 144-146; that span reads ITN. Asn-146 and Arg-180 together coordinate substrate. His-204 acts as the Proton acceptor in catalysis. NAD(+) is bound at residue Met-255.

It belongs to the LDH/MDH superfamily. MDH type 1 family. Homodimer.

Its subcellular location is the mitochondrion matrix. It catalyses the reaction (S)-malate + NAD(+) = oxaloacetate + NADH + H(+). Its function is as follows. Catalyzes the reversible conversion of (S)-malate to oxaloacetate in the citric acid cycle. The sequence is that of Malate dehydrogenase, mitochondrial from Caenorhabditis elegans.